The chain runs to 220 residues: Peptidoglycan hydrolase gp5 (220 aa).

It belongs to the peptidase U40 family. Monomer.

The protein resides in the virion. In terms of biological role, muralytic enzyme exposed to host peptidoglycan layer after membrane fusion during viral entry. Functions as an exolysin that cleaves the peptide bridge formed by meso-diaminopimelic acid and D-alanine. Also lyses the host cell late in infection to release the virions. This is Peptidoglycan hydrolase gp5 (P5) from Pseudomonas savastanoi pv. phaseolicola (Pseudomonas syringae pv. phaseolicola).